Here is a 352-residue protein sequence, read N- to C-terminus: NAD(+)-dependent homoserine dehydrogenase (352 aa).

Belongs to the homoserine dehydrogenase family.

It carries out the reaction L-homoserine + NAD(+) = L-aspartate 4-semialdehyde + NADH + H(+). Functionally, dehydrogenase involved in the degradation of canavanine, the delta-oxa-analog of arginine, allowing growth on canavanine as sole nitrogen and carbon source. Catalyzes the conversion of homoserine and NAD(+) to aspartate-semialdehyde and NADH. Is highly specific for NAD(+) and cannot use NADP(+). The chain is NAD(+)-dependent homoserine dehydrogenase from Pseudomonas canavaninivorans.